The chain runs to 200 residues: Molybdopterin synthase catalytic subunit (200 aa).

Residues 16–30 show a composition bias toward polar residues; sequence KLPSSHQSVEDSASE. The interval 16-43 is disordered; that stretch reads KLPSSHQSVEDSASEPSGYEAKDPPQDT. S20 carries the post-translational modification Phosphoserine. Substrate is bound by residues 154-155, K170, and 177-179; these read HR and KKE.

The protein belongs to the MoaE family. MOCS2B subfamily. As to quaternary structure, heterotetramer; composed of 2 small (MOCS2A) and 2 large (MOCS2B) subunits.

Its subcellular location is the cytoplasm. It localises to the cytosol. The catalysed reaction is 2 [molybdopterin-synthase sulfur-carrier protein]-C-terminal-Gly-aminoethanethioate + cyclic pyranopterin phosphate + H2O = molybdopterin + 2 [molybdopterin-synthase sulfur-carrier protein]-C-terminal Gly-Gly + 2 H(+). Its pathway is cofactor biosynthesis; molybdopterin biosynthesis. Catalytic subunit of the molybdopterin synthase complex, a complex that catalyzes the conversion of precursor Z into molybdopterin. Acts by mediating the incorporation of 2 sulfur atoms from thiocarboxylated MOCS2A into precursor Z to generate a dithiolene group. In Rattus norvegicus (Rat), this protein is Molybdopterin synthase catalytic subunit.